The following is a 413-amino-acid chain: FAD-dependent monooxygenase vrtH (413 aa).

A signal peptide spans 1 to 23; sequence MQRANHTRPVLIIGAGLSGLAIG. Residue Asn5 is glycosylated (N-linked (GlcNAc...) asparagine). 2 residues coordinate FAD: Glu37 and Ala48. Residue Asn94 is glycosylated (N-linked (GlcNAc...) asparagine). Arg120 lines the FAD pocket. The N-linked (GlcNAc...) asparagine glycan is linked to Asn232. FAD-binding residues include Asp327 and Gly340.

It belongs to the paxM FAD-dependent monooxygenase family. Requires FAD as cofactor.

It functions in the pathway secondary metabolite biosynthesis; terpenoid biosynthesis. Its function is as follows. FAD-dependent monooxygenase; part of the gene cluster that mediates the biosynthesis of viridicatumtoxin, a tetracycline-like fungal meroterpenoid with a unique, fused spirobicyclic ring system. The first step of the pathway is the production of the malonamoyl-CoA starter unit for the polyketide synthase vrtA. The aldolase vrtJ may be involved in the synthesis of the malonamate substrate for malonamoyl-CoA synthetase vrtB. The polyketide synthase vrtA then may utilize the malonamoyl-CoA starter unit, followed by sequential condensation of eight malonyl-CoA units to form the polyketide backbone. The cyclization of the last ring could be mediated by the lactamase-like protein vrtG. The proposed post-PKS tailoring steps are a hydroxylation at C5 catalyzed the cytochrome P450 monooxygenase vrtE, a hydroxylation at C12a catalyzed by VrtH and/or VrtI, and an O-methylation by the O-methyltransferase vrtF. VrtC is then proposed to catalyze the transfer of a geranyl group synthesized by vrtD to the aromatic C ring of the tetracyclic polyketide intermediate of viridicatumtoxin to yield previridicatumtoxin. Finally, the cytochrome P450 monooxygenase vrtK catalyzes the spirocyclization of the geranyl moiety of previridicatumtoxin to afford viridicatumtoxin. The chain is FAD-dependent monooxygenase vrtH from Penicillium aethiopicum.